The sequence spans 429 residues: Ribosomal RNA small subunit methyltransferase B (429 aa).

Residues 254-260 (CAAPGGK), Asp277, Asp303, and Asp322 each bind S-adenosyl-L-methionine. The active-site Nucleophile is Cys375. The interval 397–419 (ALSETGTPDQPGQQNLPGGEEGD) is disordered. Residues 400–412 (ETGTPDQPGQQNL) show a composition bias toward polar residues.

Belongs to the class I-like SAM-binding methyltransferase superfamily. RsmB/NOP family.

It is found in the cytoplasm. The enzyme catalyses cytidine(967) in 16S rRNA + S-adenosyl-L-methionine = 5-methylcytidine(967) in 16S rRNA + S-adenosyl-L-homocysteine + H(+). Functionally, specifically methylates the cytosine at position 967 (m5C967) of 16S rRNA. The polypeptide is Ribosomal RNA small subunit methyltransferase B (Salmonella agona (strain SL483)).